A 59-amino-acid chain; its full sequence is Temperature acclimation protein A (59 aa).

A CSD domain is found at 1–55 (FNDEKGFGFITPESGPDLFVHFRAIQGNGFKSLKEGQKVTFIAVQGQKGMQADKV).

Its subcellular location is the cytoplasm. Its function is as follows. Affects cell viability at low temperatures. The sequence is that of Temperature acclimation protein A (tapA) from Pseudomonas fragi.